The primary structure comprises 313 residues: Porphobilinogen deaminase (313 aa).

Position 242 is an S-(dipyrrolylmethanemethyl)cysteine (Cys-242).

Belongs to the HMBS family. Monomer. Dipyrromethane is required as a cofactor.

The enzyme catalyses 4 porphobilinogen + H2O = hydroxymethylbilane + 4 NH4(+). Its pathway is porphyrin-containing compound metabolism; protoporphyrin-IX biosynthesis; coproporphyrinogen-III from 5-aminolevulinate: step 2/4. Its function is as follows. Tetrapolymerization of the monopyrrole PBG into the hydroxymethylbilane pre-uroporphyrinogen in several discrete steps. This is Porphobilinogen deaminase from Klebsiella pneumoniae (strain 342).